A 453-amino-acid chain; its full sequence is Homogentisate 1,2-dioxygenase (453 aa).

Residues 1–42 form a disordered region; it reads MLEKAEKQRRAGSGQQRAAGYMPGFGNDFETESLPGALPQGQ. Residue His-306 is the Proton acceptor of the active site. Residues His-349 and Glu-355 each contribute to the Fe cation site. The homogentisate site is built by Tyr-364 and His-385. His-385 is a binding site for Fe cation.

This sequence belongs to the homogentisate dioxygenase family. In terms of assembly, hexamer; dimer of trimers. It depends on Fe cation as a cofactor.

It carries out the reaction homogentisate + O2 = 4-maleylacetoacetate + H(+). The protein operates within amino-acid degradation; L-phenylalanine degradation; acetoacetate and fumarate from L-phenylalanine: step 4/6. In terms of biological role, involved in the catabolism of homogentisate (2,5-dihydroxyphenylacetate or 2,5-OH-PhAc), a central intermediate in the degradation of phenylalanine and tyrosine. Catalyzes the oxidative ring cleavage of the aromatic ring of homogentisate to yield maleylacetoacetate. This chain is Homogentisate 1,2-dioxygenase, found in Rhizobium meliloti (strain 1021) (Ensifer meliloti).